The sequence spans 353 residues: Ribosomal RNA small subunit methyltransferase C (353 aa).

The protein belongs to the methyltransferase superfamily. RsmC family. In terms of assembly, monomer.

It localises to the cytoplasm. It catalyses the reaction guanosine(1207) in 16S rRNA + S-adenosyl-L-methionine = N(2)-methylguanosine(1207) in 16S rRNA + S-adenosyl-L-homocysteine + H(+). Functionally, specifically methylates the guanine in position 1207 of 16S rRNA in the 30S particle. This is Ribosomal RNA small subunit methyltransferase C from Marinomonas sp. (strain MWYL1).